Consider the following 407-residue polypeptide: MAAKMEITLSSNTEASSKQERHIIAKLEEKRGPPLQKNCPDPELCRQSFRRFCYQEVSGPQEALSQLRQLCRQWLQPELHTKEQILELLVMEQFLTILPPEIQARVRHRCPMSSKEIVTLVEDFHRASKKPKQWVAVCMQGQKVLLEKTGSQLGEQELPDFQPQTPRRDLRESSPAEPSQAGAYDRLSPHHWEKSPLLQEPTPKLAGTEAPRMRSDNKENPQQEGAKGAKPCAVSAGRSKGNGLQNPEPRGANMSEPRLSRRQVSSPNAQKPFAHYQRHCRVEYISSPLKSHPLRELKKSKGGKRSLSNRLQHLGHQPTRSAKKPYKCDDCGKSFTWNSELKRHKRVHTGERPYTCGECGNCFGRQSTLKLHQRIHTGEKPYQCGQCGKSFRQSSNLHQHHRLHHGD.

The interval Met-1 to Glu-20 is disordered. Lys-26 is covalently cross-linked (Glycyl lysine isopeptide (Lys-Gly) (interchain with G-Cter in SUMO2)). Positions Gly-59 to Phe-124 constitute an SCAN box domain. A disordered region spans residues Gly-150–Gln-270. A Glycyl lysine isopeptide (Lys-Gly) (interchain with G-Cter in SUMO2) cross-link involves residue Lys-204. Over residues Pro-211–Pro-221 the composition is skewed to basic and acidic residues. Glycyl lysine isopeptide (Lys-Gly) (interchain with G-Cter in SUMO2) cross-links involve residues Lys-230 and Lys-271. 3 C2H2-type zinc fingers span residues Tyr-326–His-348, Tyr-354–His-376, and Tyr-382–His-405.

This sequence belongs to the krueppel C2H2-type zinc-finger protein family. Homodimer. Expressed in a variety of organs, but most strongly in adult testis and ovary followed by small intestine, colon, prostate, thymus, spleen, pancreas, skeletal muscle, heart, brain and kidney. Also expressed in umbilical vein endothelial cells, foreskin fibroblast and Hep-G2 cells.

Its subcellular location is the nucleus. Transcriptional repressor. The polypeptide is Zinc finger protein 174 (ZNF174) (Homo sapiens (Human)).